The sequence spans 434 residues: Sodium/bile acid cotransporter 5 (434 aa).

Positions 1 to 18 (MSGKLFIILLLLVTPGEA) are cleaved as a signal peptide. The Extracellular segment spans residues 19 to 129 (RKSFLRFLNI…VSVFRQTEDS (111 aa)). N-linked (GlcNAc...) asparagine glycans are attached at residues Asn73 and Asn96. Residues 130-150 (LFQEPIHVNSSVFLLVLLMIL) form a helical membrane-spanning segment. Over 151-172 (LNKCAFGCKIELQVLQTVWKRP) the chain is Cytoplasmic. A helical transmembrane segment spans residues 173 to 193 (LPILLGAVTQFFLMPFCGFLL). The Extracellular segment spans residues 194–195 (SQ). Residues 196–216 (ILGLSKAQAFGFVMTCTCPGG) form a helical membrane-spanning segment. The Cytoplasmic segment spans residues 217-232 (GGGYLFALLLEGDVTL). The helical transmembrane segment at 233 to 255 (AILMACTSTSLALIMMPVNSYLY) threads the bilayer. Residues 256-268 (SCLLGLAGVFHVP) lie on the Extracellular side of the membrane. A helical membrane pass occupies residues 269–289 (VLKIVSTLLFILTPVSIGIVI). The Cytoplasmic segment spans residues 290–306 (KHRMPKKAVCLERVVQP). A helical transmembrane segment spans residues 307 to 327 (LSLTLMLVGVYLAFRMGLVFL). The Extracellular segment spans residues 328–331 (RMAN). Residues 332–352 (LEVFLLGLLVPVLGFSFGYSF) form a helical membrane-spanning segment. Topologically, residues 353 to 365 (AKVYLLPLPVCKT) are cytoplasmic. The chain crosses the membrane as a helical span at residues 366–386 (VAIESGMLNSFLALAIIQLSF). Topologically, residues 387 to 395 (PQSKAYEAS) are extracellular. Residues 396–416 (VAPFTVAMCSSCEMLLLLLVY) traverse the membrane as a helical segment. Over 417–434 (KAKKRPLLSTENEKAPLV) the chain is Cytoplasmic.

It belongs to the bile acid:sodium symporter (BASS) (TC 2.A.28) family.

It is found in the membrane. The polypeptide is Sodium/bile acid cotransporter 5 (Slc10a5) (Rattus norvegicus (Rat)).